The chain runs to 484 residues: Serine protease HTR4 (484 aa).

The signal sequence occupies residues 1-28 (MARPLQRPAGLGPFVLLWLLLPAPSGRG). The region spanning 36–114 (PVPRCPAACE…GRPLGTCGCP (79 aa)) is the IGFBP N-terminal domain. Disulfide bonds link C40-C66, C44-C68, C49-C69, C55-C72, C80-C94, C88-C111, C113-C132, and C121-C157. Positions 105–159 (GRPLGTCGCPAAGATVCGSDGRTYRSLCALRAENRAARLRGALPAVPVQKGDCGD) constitute a Kazal-like domain. Residues 209 to 369 (ASGFIVSEDG…IPSDRIRQFL (161 aa)) are serine protease. Catalysis depends on charge relay system residues H225, D255, and S333. Residues 390–472 (LRMLPLTMNL…LSLLVRRKSQ (83 aa)) form the PDZ domain.

This sequence belongs to the peptidase S1C family.

Its subcellular location is the secreted. Its function is as follows. Serine protease. The polypeptide is Serine protease HTR4 (HTRA4) (Bos taurus (Bovine)).